Consider the following 150-residue polypeptide: Peptidoglycan-associated lipoprotein (150 aa).

The signal sequence occupies residues 1-19; it reads MKKLTKVLLVAGSVAVLAA. Cys20 is lipidated: N-palmitoyl cysteine. The S-diacylglycerol cysteine moiety is linked to residue Cys20. The OmpA-like domain occupies 37-150; it reads SVQDLQQRYN…SKNRRAVLAY (114 aa).

Belongs to the Pal lipoprotein family. The Tol-Pal system is composed of five core proteins: the inner membrane proteins TolA, TolQ and TolR, the periplasmic protein TolB and the outer membrane protein Pal. They form a network linking the inner and outer membranes and the peptidoglycan layer.

The protein resides in the cell outer membrane. Functionally, part of the Tol-Pal system, which plays a role in outer membrane invagination during cell division and is important for maintaining outer membrane integrity. In Pasteurella multocida (strain Pm70), this protein is Peptidoglycan-associated lipoprotein.